A 136-amino-acid polypeptide reads, in one-letter code: Protein NrdI (136 aa).

Belongs to the NrdI family.

Its function is as follows. Probably involved in ribonucleotide reductase function. The sequence is that of Protein NrdI from Salmonella paratyphi A (strain ATCC 9150 / SARB42).